A 270-amino-acid chain; its full sequence is uncharacterized protein (270 aa).

The disordered stretch occupies residues 235-270 (LADSDLEADSDDSESFEFVENPEPSENGSEPTIKND). The segment covering 238 to 251 (SDLEADSDDSESFE) has biased composition (acidic residues). Positions 255–270 (NPEPSENGSEPTIKND) are enriched in low complexity.

This is an uncharacterized protein from Halorubrum sp. PV6 (HRPV-1).